A 141-amino-acid polypeptide reads, in one-letter code: Large ribosomal subunit protein uL11 (141 aa).

Belongs to the universal ribosomal protein uL11 family. As to quaternary structure, part of the ribosomal stalk of the 50S ribosomal subunit. Interacts with L10 and the large rRNA to form the base of the stalk. L10 forms an elongated spine to which L12 dimers bind in a sequential fashion forming a multimeric L10(L12)X complex.

In terms of biological role, forms part of the ribosomal stalk which helps the ribosome interact with GTP-bound translation factors. This Acidianus ambivalens (Desulfurolobus ambivalens) protein is Large ribosomal subunit protein uL11.